The following is a 264-amino-acid chain: Phosphonates import ATP-binding protein PhnC (264 aa).

The ABC transporter domain occupies 3 to 246 (IRLQEAGLRH…MLDALYANEQ (244 aa)). 35–42 (GPSGAGKS) serves as a coordination point for ATP.

Belongs to the ABC transporter superfamily. Phosphonates importer (TC 3.A.1.9.1) family. The complex is composed of two ATP-binding proteins (PhnC), two transmembrane proteins (PhnE) and a solute-binding protein (PhnD).

It is found in the cell inner membrane. It catalyses the reaction phosphonate(out) + ATP + H2O = phosphonate(in) + ADP + phosphate + H(+). Part of the ABC transporter complex PhnCDE involved in phosphonates import. Responsible for energy coupling to the transport system. In Pseudomonas entomophila (strain L48), this protein is Phosphonates import ATP-binding protein PhnC.